A 406-amino-acid chain; its full sequence is Odorant receptor 10a (406 aa).

At 1-45 the chain is on the cytoplasmic side; that stretch reads MSEWLRFLKRDQQLDVYFFAVPRLSLDIMGYWPGKTGDTWPWRSL. The helical transmembrane segment at 46–66 threads the bilayer; it reads IHFAILAIGVATELHAGMCFL. Residues 67–74 lie on the Extracellular side of the membrane; the sequence is DRQQITLA. Residues 75 to 95 form a helical membrane-spanning segment; it reads LETLCPAGTSAVTLLKMFLML. The Cytoplasmic segment spans residues 96–143; the sequence is RFRQDLSIMWNRLRGLLFDPNWERPEQRDIRLKHSAMAARINFWPLSA. A helical membrane pass occupies residues 144 to 164; sequence GFFTCTTYNLKPILIAMILYL. Residues 165–189 lie on the Extracellular side of the membrane; the sequence is QNRYEDFVWFTPFNMTMPKVLLNYP. N-linked (GlcNAc...) asparagine glycosylation occurs at asparagine 178. Residues 190 to 210 traverse the membrane as a helical segment; it reads FFPLTYIFIAYTGYVTIFMFG. The Cytoplasmic portion of the chain corresponds to 211–281; it reads GCDGFYFEFC…LTRFFRDRYT (71 aa). A helical transmembrane segment spans residues 282-302; that stretch reads IITLAHFVSAAMVIGFSMVNL. Residues 303–308 are Extracellular-facing; the sequence is LTLGNN. Residues 309 to 329 form a helical membrane-spanning segment; it reads GLGAMLYVAYTVAALSQLLVY. The Cytoplasmic portion of the chain corresponds to 330 to 372; it reads CYGGTLVAESSTGLCRAMFSCPWQLFKPKQRRLVQLLILRSQR. The helical transmembrane segment at 373–393 threads the bilayer; sequence PVSMAVPFFSPSLATFAAILQ. Over 394–406 the chain is Extracellular; it reads TSGSIIALVKSFQ.

The protein belongs to the insect chemoreceptor superfamily. Heteromeric odorant receptor channel (TC 1.A.69) family. Or1a subfamily. As to quaternary structure, interacts with Orco. Complexes exist early in the endomembrane system in olfactory sensory neurons (OSNs), coupling these complexes to the conserved ciliary trafficking pathway. As to expression, expressed in olfactory sensory neurons in the antenna.

It is found in the cell membrane. Its function is as follows. Odorant receptor which mediates acceptance or avoidance behavior, depending on its substrates. The odorant receptor repertoire encodes a large collection of odor stimuli that vary widely in identity, intensity, and duration. May form a complex with Orco to form odorant-sensing units, providing sensitive and prolonged odorant signaling and calcium permeability. Involved in the behavioral responses to esters, and specifically to ethyl hexanoate, benzaldehyde, and acetophenone. This chain is Odorant receptor 10a (Or10a), found in Drosophila melanogaster (Fruit fly).